Consider the following 256-residue polypeptide: 5-oxoprolinase subunit A (256 aa).

It belongs to the LamB/PxpA family. Forms a complex composed of PxpA, PxpB and PxpC.

The enzyme catalyses 5-oxo-L-proline + ATP + 2 H2O = L-glutamate + ADP + phosphate + H(+). Functionally, catalyzes the cleavage of 5-oxoproline to form L-glutamate coupled to the hydrolysis of ATP to ADP and inorganic phosphate. This is 5-oxoprolinase subunit A from Azoarcus sp. (strain BH72).